We begin with the raw amino-acid sequence, 621 residues long: Cystathionine gamma-synthase (621 aa).

Lys429 is modified (N6-(pyridoxal phosphate)lysine).

This sequence belongs to the trans-sulfuration enzymes family. MET7 subfamily. As to quaternary structure, both met-3 and met-7 are required to form a functional cystathionine gamma-synthase. Pyridoxal 5'-phosphate serves as cofactor.

It carries out the reaction O-succinyl-L-homoserine + L-cysteine = L,L-cystathionine + succinate + H(+). Its pathway is amino-acid biosynthesis; L-methionine biosynthesis via de novo pathway; L-cystathionine from O-succinyl-L-homoserine: step 1/1. Its function is as follows. Catalyzes the formation of L-cystathionine from O-succinyl-L-homoserine (OSHS) and L-cysteine, via a gamma-replacement reaction. In the absence of thiol, catalyzes gamma-elimination to form 2-oxobutanoate, succinate and ammonia. This chain is Cystathionine gamma-synthase (met-7), found in Neurospora crassa (strain ATCC 24698 / 74-OR23-1A / CBS 708.71 / DSM 1257 / FGSC 987).